The chain runs to 736 residues: uncharacterized protein (736 aa).

ABC transporter domains follow at residues 183–459 (IKID…KQME) and 518–734 (LQMS…TMTI). ATP contacts are provided by residues 215-222 (GRNGIGKS) and 551-558 (GPNGAGKS).

The protein belongs to the ABC transporter superfamily.

It localises to the cytoplasm. This is an uncharacterized protein from Schizosaccharomyces pombe (strain 972 / ATCC 24843) (Fission yeast).